The primary structure comprises 198 residues: Na(+)-translocating NADH-quinone reductase subunit E (198 aa).

6 helical membrane-spanning segments follow: residues 11-31, 35-55, 77-97, 110-130, 140-160, and 176-196; these read AVFVENMALAFFLGMCTFLAV, VSTASGLGVAVTVVLGLAVPI, FLNFITFIGVIAALVQILEMI, GIFLPLIAVNCAIFGGVSFMV, IVYGFGSGIGWMLAIVAMAGI, and LGITFITTGLMALGFMSFSGV.

Belongs to the NqrDE/RnfAE family. As to quaternary structure, composed of six subunits; NqrA, NqrB, NqrC, NqrD, NqrE and NqrF.

It is found in the cell inner membrane. The enzyme catalyses a ubiquinone + n Na(+)(in) + NADH + H(+) = a ubiquinol + n Na(+)(out) + NAD(+). NQR complex catalyzes the reduction of ubiquinone-1 to ubiquinol by two successive reactions, coupled with the transport of Na(+) ions from the cytoplasm to the periplasm. NqrA to NqrE are probably involved in the second step, the conversion of ubisemiquinone to ubiquinol. The chain is Na(+)-translocating NADH-quinone reductase subunit E from Klebsiella pneumoniae subsp. pneumoniae (strain ATCC 700721 / MGH 78578).